The sequence spans 163 residues: Nucleotide-binding protein YajQ (163 aa).

The protein belongs to the YajQ family.

Its function is as follows. Nucleotide-binding protein. This is Nucleotide-binding protein YajQ from Escherichia coli O81 (strain ED1a).